The primary structure comprises 77 residues: MADVLERVTKIVVDRLGVEETEVVPAASFKEDLGADSLDVVELVMQLEDEFEMEISDEDAEKIATVGDAVTYIESHL.

The region spanning 2-77 is the Carrier domain; the sequence is ADVLERVTKI…DAVTYIESHL (76 aa). The residue at position 37 (Ser-37) is an O-(pantetheine 4'-phosphoryl)serine.

The protein belongs to the acyl carrier protein (ACP) family. 4'-phosphopantetheine is transferred from CoA to a specific serine of apo-ACP by AcpS. This modification is essential for activity because fatty acids are bound in thioester linkage to the sulfhydryl of the prosthetic group.

Its subcellular location is the cytoplasm. Its pathway is lipid metabolism; fatty acid biosynthesis. Carrier of the growing fatty acid chain in fatty acid biosynthesis. This is Acyl carrier protein from Bacillus mycoides (strain KBAB4) (Bacillus weihenstephanensis).